The primary structure comprises 859 residues: Leucine--tRNA ligase (859 aa).

A 'HIGH' region motif is present at residues 42–52 (PYPSGKLHVGH). Positions 611-615 (KMSKS) match the 'KMSKS' region motif. Lys614 serves as a coordination point for ATP.

It belongs to the class-I aminoacyl-tRNA synthetase family.

Its subcellular location is the cytoplasm. It carries out the reaction tRNA(Leu) + L-leucine + ATP = L-leucyl-tRNA(Leu) + AMP + diphosphate. The polypeptide is Leucine--tRNA ligase (Fusobacterium nucleatum subsp. nucleatum (strain ATCC 25586 / DSM 15643 / BCRC 10681 / CIP 101130 / JCM 8532 / KCTC 2640 / LMG 13131 / VPI 4355)).